The sequence spans 572 residues: MGFRINTNVAALNAKANADLNSKSLDASLSRLSSGLRINSAADDASGMAIADSLRSQANTLGQAISNGNDALGILQTADKAMDEQLKILDTIKTKATQAAQDGQSLKTRTMLQADINRLMEELDNIANTTSFNGKQLLSGNFINQEFQIGASSNQTVKATIGATQSSKIGLTRFETGGRISTSGEVQFTLKNYNGIDDFQFQKVVISTSVGTGLGALADEINKNADKTGVRATFTVETRGIAAVRAGATSDTFAINGVKIGKVDYKDGDANGALVAAINSVKDTTGVEASIDANGQLLLTSREGRGIKIDGNIGGGAFINADMKENYGRLSLVKNDGKDILISGSNLSSAGFGATQFISQASVSLRESKGQIDANIADAMGFGSANKGVVLGGYSSVSAYMSSAGSGFSSGSGYSVGSGKNYSTGFANAIAISAASQLSTVYNVSAGSGFSSGSTLSQFATMKTTAFGVKDETAGVTTLKGAMAVMDIAETAITNLDQIRADIGSVQNQVTSTINNITVTQVNVKAAESQIRDVDFAAESANYSKANILAQSGSYAMAQANSVQQNVLRLLQ.

This sequence belongs to the bacterial flagellin family. As to quaternary structure, heteromer of FlaA and FlaB. Interacts with FliW.

It is found in the secreted. The protein localises to the bacterial flagellum. Flagellin is the subunit protein which polymerizes to form the filaments of bacterial flagella. FlaA binds to flagellar assembly factor FliW protein, preventing FliW from binding to CsrA, so that CsrA can then bind flaA mRNA and represses its translation. This Campylobacter jejuni subsp. jejuni serotype O:2 (strain ATCC 700819 / NCTC 11168) protein is Flagellin A (flaA).